A 1947-amino-acid polypeptide reads, in one-letter code: DNA-directed RNA polymerase subunit beta' (1947 aa).

Zn(2+) contacts are provided by Cys-119, Cys-121, Cys-141, and Cys-144. Mg(2+)-binding residues include Asp-1778, Asp-1780, and Asp-1782.

This sequence belongs to the RNA polymerase beta' chain family. RpoC1 subfamily. In plastids the minimal PEP RNA polymerase catalytic core is composed of four subunits: alpha, beta, beta', and beta''. When a (nuclear-encoded) sigma factor is associated with the core the holoenzyme is formed, which can initiate transcription. Mg(2+) serves as cofactor. Zn(2+) is required as a cofactor.

Its subcellular location is the plastid. The protein localises to the chloroplast. The enzyme catalyses RNA(n) + a ribonucleoside 5'-triphosphate = RNA(n+1) + diphosphate. In terms of biological role, DNA-dependent RNA polymerase catalyzes the transcription of DNA into RNA using the four ribonucleoside triphosphates as substrates. The polypeptide is DNA-directed RNA polymerase subunit beta' (Oedogonium cardiacum (Filamentous green alga)).